The chain runs to 225 residues: Thymidylate kinase (225 aa).

10 to 17 is a binding site for ATP; that stretch reads GPEGAGKT.

Belongs to the thymidylate kinase family.

The catalysed reaction is dTMP + ATP = dTDP + ADP. In terms of biological role, phosphorylation of dTMP to form dTDP in both de novo and salvage pathways of dTTP synthesis. In Geobacillus thermodenitrificans (strain NG80-2), this protein is Thymidylate kinase.